A 212-amino-acid polypeptide reads, in one-letter code: Thiamine-phosphate synthase (212 aa).

Residues 40-44 and asparagine 75 contribute to the 4-amino-2-methyl-5-(diphosphooxymethyl)pyrimidine site; that span reads QFREK. Mg(2+)-binding residues include aspartate 76 and aspartate 95. A 4-amino-2-methyl-5-(diphosphooxymethyl)pyrimidine-binding site is contributed by serine 113. Residue 139–141 coordinates 2-[(2R,5Z)-2-carboxy-4-methylthiazol-5(2H)-ylidene]ethyl phosphate; it reads TPS. Residue lysine 142 participates in 4-amino-2-methyl-5-(diphosphooxymethyl)pyrimidine binding. Residues glycine 171 and 191 to 192 each bind 2-[(2R,5Z)-2-carboxy-4-methylthiazol-5(2H)-ylidene]ethyl phosphate; that span reads IS.

This sequence belongs to the thiamine-phosphate synthase family. Mg(2+) serves as cofactor.

It carries out the reaction 2-[(2R,5Z)-2-carboxy-4-methylthiazol-5(2H)-ylidene]ethyl phosphate + 4-amino-2-methyl-5-(diphosphooxymethyl)pyrimidine + 2 H(+) = thiamine phosphate + CO2 + diphosphate. It catalyses the reaction 2-(2-carboxy-4-methylthiazol-5-yl)ethyl phosphate + 4-amino-2-methyl-5-(diphosphooxymethyl)pyrimidine + 2 H(+) = thiamine phosphate + CO2 + diphosphate. The enzyme catalyses 4-methyl-5-(2-phosphooxyethyl)-thiazole + 4-amino-2-methyl-5-(diphosphooxymethyl)pyrimidine + H(+) = thiamine phosphate + diphosphate. It participates in cofactor biosynthesis; thiamine diphosphate biosynthesis; thiamine phosphate from 4-amino-2-methyl-5-diphosphomethylpyrimidine and 4-methyl-5-(2-phosphoethyl)-thiazole: step 1/1. In terms of biological role, condenses 4-methyl-5-(beta-hydroxyethyl)thiazole monophosphate (THZ-P) and 2-methyl-4-amino-5-hydroxymethyl pyrimidine pyrophosphate (HMP-PP) to form thiamine monophosphate (TMP). The chain is Thiamine-phosphate synthase from Staphylococcus carnosus (strain TM300).